Consider the following 838-residue polypeptide: Periostin (838 aa).

A signal peptide spans 1–23 (MVPLLPLYALLLLFLCDINPANA). One can recognise an EMI domain in the interval 42–96 (GPNVCALQQILGTKKKYFSSCKNWYQGAICGKKTTVLYECCPGYMRMEGMKGCPA). Cystine bridges form between cysteine 46-cysteine 82, cysteine 71-cysteine 335, cysteine 81-cysteine 94, cysteine 210-cysteine 313, and cysteine 469-cysteine 474. Residue cysteine 62 is modified to S-cysteinyl cysteine. 4 FAS1 domains span residues 99 to 232 (PIDH…DRVL), 236 to 367 (GTSI…DEVL), 370 to 494 (DSAK…REII), and 498 to 630 (EKSL…DKLL). Residue asparagine 601 is glycosylated (N-linked (GlcNAc...) asparagine). The disordered stretch occupies residues 811–838 (QGDTPAKKIPANKRVQGPRRRSREGRSQ). A compositionally biased stretch (basic residues) spans 826 to 838 (QGPRRRSREGRSQ).

As to quaternary structure, homodimer. Interacts with BMP1 and fibronectin. Post-translationally, gamma-carboxylation is controversial. Gamma-carboxyglutamated; gamma-carboxyglutamate residues are formed by vitamin K dependent carboxylation; these residues may be required for binding to calcium. According to a more recent report in human, does not contain vitamin K-dependent gamma-carboxyglutamate residues. As to expression, preferentially expressed in periosteum and periodontal ligament. Also expressed in the developing and adult heart.

It localises to the golgi apparatus. The protein resides in the secreted. Its subcellular location is the extracellular space. It is found in the extracellular matrix. Functionally, induces cell attachment and spreading and plays a role in cell adhesion. Enhances incorporation of BMP1 in the fibronectin matrix of connective tissues, and subsequent proteolytic activation of lysyl oxidase LOX. This is Periostin (Postn) from Mus musculus (Mouse).